Here is a 73-residue protein sequence, read N- to C-terminus: DNA-directed RNA polymerase subunit omega (73 aa).

Belongs to the RNA polymerase subunit omega family. As to quaternary structure, the RNAP catalytic core consists of 2 alpha, 1 beta, 1 beta' and 1 omega subunit. When a sigma factor is associated with the core the holoenzyme is formed, which can initiate transcription.

The catalysed reaction is RNA(n) + a ribonucleoside 5'-triphosphate = RNA(n+1) + diphosphate. Functionally, promotes RNA polymerase assembly. Latches the N- and C-terminal regions of the beta' subunit thereby facilitating its interaction with the beta and alpha subunits. The chain is DNA-directed RNA polymerase subunit omega from Lactobacillus delbrueckii subsp. bulgaricus (strain ATCC BAA-365 / Lb-18).